The following is a 229-amino-acid chain: Cytochrome c oxidase assembly factor 7 (229 aa).

Sel1-like repeat units follow at residues 34-66 (PEGC…EVNA), 68-104 (AQSC…NTQG), 108-145 (VDAC…EGGF), 146-182 (APSC…DLGH), and 183-218 (VWGC…DLHG). The tract at residues 197–229 (DGTDKDEQRAEELKNRAKDLHGQEKERQLKFGE) is disordered.

It belongs to the hcp beta-lactamase family.

The protein resides in the mitochondrion intermembrane space. Its function is as follows. May be required for assembly of mitochondrial respiratory chain complexes. The sequence is that of Cytochrome c oxidase assembly factor 7 (coa7) from Danio rerio (Zebrafish).